A 104-amino-acid polypeptide reads, in one-letter code: DNA-directed RNA polymerase subunit omega (104 aa).

A disordered region spans residues glutamate 53 to isoleucine 104. Residues proline 63–isoleucine 104 show a composition bias toward basic and acidic residues.

This sequence belongs to the RNA polymerase subunit omega family. In terms of assembly, the RNAP catalytic core consists of 2 alpha, 1 beta, 1 beta' and 1 omega subunit. When a sigma factor is associated with the core the holoenzyme is formed, which can initiate transcription.

It carries out the reaction RNA(n) + a ribonucleoside 5'-triphosphate = RNA(n+1) + diphosphate. Promotes RNA polymerase assembly. Latches the N- and C-terminal regions of the beta' subunit thereby facilitating its interaction with the beta and alpha subunits. The chain is DNA-directed RNA polymerase subunit omega from Streptococcus pneumoniae serotype 2 (strain D39 / NCTC 7466).